The chain runs to 134 residues: TSC22 domain family protein 3 (134 aa).

Met1 is modified (N-acetylmethionine). The interval 1 to 60 (MNTEMYQTPMEVAVYQLHNFSISFFSSLLGGDVVSVKLDNSASGASVVAIDNKIEQAMDL) is AP1-binding. Ala42 and Val73 each carry phosphoserine. A leucine-zipper region spans residues 76–97 (LKEQIRELVEKNSQLERENTLL). Residue Ser102 is modified to Phosphoserine. The interval 108–134 (KFQSCLSPEEPAPESPQVPEAPGGSAV) is disordered.

Belongs to the TSC-22/Dip/Bun family. Can form homodimers, however it is likely to function as a monomer. Interacts with NFKB1. Interacts (via N-terminus) with JUN and FOS; these interactions inhibit the binding of active AP1 to its target DNA. In terms of assembly, interacts with MYOD1. Interacts with HDAC1; this interaction affects HDAC1 activity on MYOG promoter and thus inhibits MYOD1 transcriptional activity. Ubiquitously expressed, including in the fetal brain and liver. Expressed in brain, lung, spleen and skeletal muscle. Lower levels detected in heart and kidney. Not detected in the pancreas. In non-lymphoid tissues, in the absence of inflammation, the major source of constitutive expression is the macrophage lineage. Also expressed in cells from different hemopoietic cell lineages, including bone marrow cells, CD34+ stem cells, mature B- and T-cells, monocytes and granulocytes. Down-regulated in activated macrophages from inflammatory lesions of delayed-type hypersensitivity (DTH) reactions, such as in tuberculosis and in Crohn disease, whereas in Burkitt lymphoma, persists in macrophages involved in the phagocytosis of apoptotic malignant cells.

Its subcellular location is the cytoplasm. The protein localises to the nucleus. Its function is as follows. Protects T-cells from IL2 deprivation-induced apoptosis through the inhibition of FOXO3A transcriptional activity that leads to the down-regulation of the pro-apoptotic factor BCL2L11. In macrophages, plays a role in the anti-inflammatory and immunosuppressive effects of glucocorticoids and IL10. In T-cells, inhibits anti-CD3-induced NFKB1 nuclear translocation and thereby NFKB1 DNA-binding activities. In vitro, suppresses AP-1 transcription factor complex DNA-binding activities. Functionally, inhibits myogenic differentiation and mediates anti-myogenic effects of glucocorticoids by binding and regulating MYOD1 and HDAC1 transcriptional activity resulting in reduced expression of MYOG. This Homo sapiens (Human) protein is TSC22 domain family protein 3.